The chain runs to 482 residues: Adenylosuccinate lyase (482 aa).

Residues 14-15 (RY), 82-84 (RHD), and 108-109 (TS) contribute to the substrate site. Residue histidine 156 is the Proton donor/acceptor of the active site. A substrate-binding site is contributed by glutamine 238. Catalysis depends on serine 286, which acts as the Proton donor/acceptor. Substrate contacts are provided by arginine 300, arginine 326, serine 331, and arginine 335.

The protein belongs to the lyase 1 family. Adenylosuccinate lyase subfamily. Homotetramer. Residues from neighboring subunits contribute catalytic and substrate-binding residues to each active site.

The enzyme catalyses N(6)-(1,2-dicarboxyethyl)-AMP = fumarate + AMP. The catalysed reaction is (2S)-2-[5-amino-1-(5-phospho-beta-D-ribosyl)imidazole-4-carboxamido]succinate = 5-amino-1-(5-phospho-beta-D-ribosyl)imidazole-4-carboxamide + fumarate. It functions in the pathway purine metabolism; AMP biosynthesis via de novo pathway; AMP from IMP: step 2/2. The protein operates within purine metabolism; IMP biosynthesis via de novo pathway; 5-amino-1-(5-phospho-D-ribosyl)imidazole-4-carboxamide from 5-amino-1-(5-phospho-D-ribosyl)imidazole-4-carboxylate: step 2/2. This Schizosaccharomyces pombe (strain 972 / ATCC 24843) (Fission yeast) protein is Adenylosuccinate lyase (ade8).